The chain runs to 93 residues: Phosphocarrier protein HPr (93 aa).

An HPr domain is found at 2–89; the sequence is AERRVNVGWA…KLVAEGLEEL (88 aa). The active-site Pros-phosphohistidine intermediate is His15.

Belongs to the HPr family.

The protein localises to the cytoplasm. In terms of biological role, general (non sugar-specific) component of the phosphoenolpyruvate-dependent sugar phosphotransferase system (sugar PTS). This major carbohydrate active-transport system catalyzes the phosphorylation of incoming sugar substrates concomitantly with their translocation across the cell membrane. The phosphoryl group from phosphoenolpyruvate (PEP) is transferred to the phosphoryl carrier protein HPr by enzyme I. Phospho-HPr then transfers it to the PTS EIIA domain. This Streptomyces coelicolor (strain ATCC BAA-471 / A3(2) / M145) protein is Phosphocarrier protein HPr (ptsH).